The primary structure comprises 669 residues: DNA ligase (669 aa).

NAD(+) contacts are provided by residues 34–38 (DAEYD), 83–84 (SL), and E114. K116 acts as the N6-AMP-lysine intermediate in catalysis. Residues R137, E171, K287, and K311 each contribute to the NAD(+) site. Residues C405, C408, C423, and C428 each contribute to the Zn(2+) site. In terms of domain architecture, BRCT spans 591–669 (NVESYFAGKT…EERFLQELNK (79 aa)).

It belongs to the NAD-dependent DNA ligase family. LigA subfamily. The cofactor is Mg(2+). Requires Mn(2+) as cofactor.

It carries out the reaction NAD(+) + (deoxyribonucleotide)n-3'-hydroxyl + 5'-phospho-(deoxyribonucleotide)m = (deoxyribonucleotide)n+m + AMP + beta-nicotinamide D-nucleotide.. DNA ligase that catalyzes the formation of phosphodiester linkages between 5'-phosphoryl and 3'-hydroxyl groups in double-stranded DNA using NAD as a coenzyme and as the energy source for the reaction. It is essential for DNA replication and repair of damaged DNA. This Bacillus cereus (strain AH187) protein is DNA ligase.